A 239-amino-acid polypeptide reads, in one-letter code: Cysteine-rich venom protein ENH1 (239 aa).

The N-terminal stretch at 1-18 (MIVFILLSLAAVLQQFVA) is a signal peptide. An SCP domain is found at 37–165 (VDMHNSFRRS…PYNYFYVCQY (129 aa)). Intrachain disulfides connect Cys-74-Cys-152, Cys-91-Cys-166, Cys-147-Cys-163, Cys-185-Cys-192, Cys-188-Cys-197, Cys-210-Cys-228, and Cys-219-Cys-232. In terms of domain architecture, ShKT spans 201 to 234 (CPITNTFTNCDSLLQQNSCEDSYIKTNCGASCFC).

The protein belongs to the CRISP family. As to expression, expressed by the venom gland.

Its subcellular location is the secreted. Functionally, blocks contraction of smooth muscle elicited by high potassium-induced depolarization, but does not block caffeine-stimulated contraction. May target voltage-gated calcium channels on smooth muscle. The chain is Cysteine-rich venom protein ENH1 from Pseudoferania polylepis (Macleay's water snake).